Reading from the N-terminus, the 258-residue chain is Ribosomal RNA large subunit methyltransferase E (258 aa).

Residues Gly58, Trp60, Asp78, Asp96, and Asp120 each coordinate S-adenosyl-L-methionine. Residue Lys160 is the Proton acceptor of the active site.

Belongs to the class I-like SAM-binding methyltransferase superfamily. RNA methyltransferase RlmE family.

It localises to the cytoplasm. The catalysed reaction is uridine(2552) in 23S rRNA + S-adenosyl-L-methionine = 2'-O-methyluridine(2552) in 23S rRNA + S-adenosyl-L-homocysteine + H(+). Its function is as follows. Specifically methylates the uridine in position 2552 of 23S rRNA at the 2'-O position of the ribose in the fully assembled 50S ribosomal subunit. The sequence is that of Ribosomal RNA large subunit methyltransferase E from Methanococcus maripaludis (strain C7 / ATCC BAA-1331).